The following is an 800-amino-acid chain: MSLVYLMATNLLFMLIVLFTLSHRQLRKVAGYVALIAPIVTSTYFIMKIPDVIRNKFIAVRLPWMPSIDINLDLRLDGLSLMFGLIISLIGVGVFFYATQYLSHSTDNLPRFFIYLLLFMFSMIGIVIANNTILMYVFWELTSISSFLLISYWYNNGESQLGAIQSFMITVFGGLALLTGFIILYIITGTNTITDILNQRNAISRHPLFIPMILMLLLGAFTKSAQFPFHIWLPKAMAAPTPVSAYLHSATMVKAGIFLLFRFTPLLGLSNVYIYTVTFVGLITMLFGSLTALRQYDLKGILAYSTISQLGMIMTMVGLGGGYAQHTSDELSKFYILVLFAGLFHLMNHAVFKCALFMGVGIIDHESGTRDIRLLNGMRKVFPKMHIVMLLAALSMAGVPFLNGFLSKEMFLDSLTKANELDQYGFVLTFVIISIGVIASILTFTYALYMIKETFWGNYNIEKFKRKQIHEPWLFSLPAVILMLLIPVIFFVPNVFGNFVILPATRSVSGIGAEVDAFVPHISQWHGVNLPLILSIVVIIIGLILALVVNWKEVTHQIIKSASITDGYRKIYREFELYSARGIRALMNNKLNYYIMITLFIFVAIVVYGYLTVGFPHVHQLHISSFGPLEVILSVVTLIIGISLIFIRQRLTMVVLNGMIGFAVTLYFIAMKAPDLALTQLVVETITTILFIVSFSRLPNIPRVKANLKKETFKIIVSLVMALTVVSLIFVAQQADGMPSIAKFYEDAYELTGGKNIVNAILGDFRALDTMFEGLVLIIAGLGIYTLLNYKDRRGQDERE.

21 consecutive transmembrane segments (helical) span residues 1 to 21 (MSLVYLMATNLLFMLIVLFTL), 29 to 49 (VAGYVALIAPIVTSTYFIMKI), 78 to 98 (GLSLMFGLIISLIGVGVFFYA), 109 to 129 (LPRFFIYLLLFMFSMIGIVIA), 133 to 153 (ILMYVFWELTSISSFLLISYW), 167 to 187 (FMITVFGGLALLTGFIILYII), 209 to 229 (FIPMILMLLLGAFTKSAQFPF), 241 to 261 (TPVSAYLHSATMVKAGIFLLF), 272 to 292 (VYIYTVTFVGLITMLFGSLTA), 300 to 320 (GILAYSTISQLGMIMTMVGLG), 336 to 356 (ILVLFAGLFHLMNHAVFKCAL), 387 to 407 (IVMLLAALSMAGVPFLNGFLS), 424 to 444 (YGFVLTFVIISIGVIASILTF), 472 to 492 (PWLFSLPAVILMLLIPVIFFV), 528 to 548 (VNLPLILSIVVIIIGLILALV), 595 to 615 (IMITLFIFVAIVVYGYLTVGF), 627 to 647 (GPLEVILSVVTLIIGISLIFI), 651 to 671 (LTMVVLNGMIGFAVTLYFIAM), 676 to 696 (LALTQLVVETITTILFIVSFS), 712 to 732 (TFKIIVSLVMALTVVSLIFVA), and 768 to 788 (LDTMFEGLVLIIAGLGIYTLL).

The protein belongs to the CPA3 antiporters (TC 2.A.63) subunit A family. In terms of assembly, may form a heterooligomeric complex that consists of seven subunits: mnhA2, mnhB2, mnhC2, mnhD2, mnhE2, mnhF2 and mnhG2.

The protein resides in the cell membrane. The protein is Putative antiporter subunit mnhA2 (mnhA2) of Staphylococcus epidermidis (strain ATCC 12228 / FDA PCI 1200).